An 84-amino-acid polypeptide reads, in one-letter code: Glutaredoxin (84 aa).

In terms of domain architecture, Glutaredoxin spans 1–84 (MPPVVIYTTA…AGKLDALLSA (84 aa)). A disulfide bridge connects residues cysteine 12 and cysteine 15.

Belongs to the glutaredoxin family. Monomer.

Its subcellular location is the cytoplasm. Has a glutathione-disulfide oxidoreductase activity in the presence of NADPH and glutathione reductase. Reduces low molecular weight disulfides and proteins. The protein is Glutaredoxin (grx) of Pseudomonas aeruginosa (strain ATCC 15692 / DSM 22644 / CIP 104116 / JCM 14847 / LMG 12228 / 1C / PRS 101 / PAO1).